Here is a 314-residue protein sequence, read N- to C-terminus: Hydroxyacyl-coenzyme A dehydrogenase, mitochondrial (314 aa).

The transit peptide at 1-12 directs the protein to the mitochondrion; the sequence is MAFVTRQFVRSM. NAD(+)-binding positions include 34 to 39 and aspartate 57; that span reads GGGLMG. Serine 73 contacts CoA. An N6-acetyllysine modification is found at lysine 75. Residue lysine 80 participates in CoA binding. Lysine 80 carries the N6-succinyllysine modification. 2 positions are modified to N6-acetyllysine; alternate: lysine 81 and lysine 87. Residues lysine 81 and lysine 87 each carry the N6-succinyllysine; alternate modification. NAD(+) is bound at residue glutamate 122. N6-acetyllysine is present on lysine 125. NAD(+) is bound at residue lysine 127. At lysine 127 the chain carries N6-(2-hydroxyisobutyryl)lysine. Position 136 is an N6-acetyllysine; alternate (lysine 136). Lysine 136 is modified (N6-succinyllysine; alternate). NAD(+)-binding residues include serine 149 and asparagine 173. A CoA-binding site is contributed by serine 149. The residue at position 179 (lysine 179) is an N6-acetyllysine. An N6-acetyllysine; alternate mark is found at lysine 185, lysine 192, and lysine 202. 3 positions are modified to N6-succinyllysine; alternate: lysine 185, lysine 192, and lysine 202. Lysine 206 bears the N6-succinyllysine mark. Lysine 212 and lysine 241 each carry N6-acetyllysine; alternate. N6-succinyllysine; alternate is present on residues lysine 212 and lysine 241. Residue lysine 305 participates in NAD(+) binding. Lysine 312 is subject to N6-acetyllysine; alternate. Lysine 312 is modified (N6-succinyllysine; alternate).

Belongs to the 3-hydroxyacyl-CoA dehydrogenase family. In terms of assembly, homodimer. Interacts with GLUD1; this interaction inhibits the activation of glutamate dehydrogenase 1 (GLUD1). Succinylation at Lys-81, adjacent to a coenzyme A binding site. Desuccinylated by SIRT5.

It is found in the mitochondrion matrix. The enzyme catalyses a (3S)-3-hydroxyacyl-CoA + NAD(+) = a 3-oxoacyl-CoA + NADH + H(+). It carries out the reaction (3S)-3-hydroxybutanoyl-CoA + NAD(+) = acetoacetyl-CoA + NADH + H(+). The catalysed reaction is (3S)-hydroxydecanoyl-CoA + NAD(+) = 3-oxodecanoyl-CoA + NADH + H(+). It catalyses the reaction (3S)-hydroxyhexadecanoyl-CoA + NAD(+) = 3-oxohexadecanoyl-CoA + NADH + H(+). It functions in the pathway lipid metabolism; fatty acid beta-oxidation. Mitochondrial fatty acid beta-oxidation enzyme that catalyzes the third step of the beta-oxidation cycle for medium and short-chain 3-hydroxy fatty acyl-CoAs (C4 to C10). Plays a role in the control of insulin secretion by inhibiting the activation of glutamate dehydrogenase 1 (GLUD1), an enzyme that has an important role in regulating amino acid-induced insulin secretion. Plays a role in the maintenance of normal spermatogenesis through the reduction of fatty acid accumulation in the testes. In Rattus norvegicus (Rat), this protein is Hydroxyacyl-coenzyme A dehydrogenase, mitochondrial (Hadh).